The following is a 236-amino-acid chain: uncharacterized protein (236 aa).

An ABC transporter domain is found at 4–225; that stretch reads LLEASIEQAG…TGLEGQSLLD (222 aa). 38–45 contacts ATP; that stretch reads GANGAGKS.

Belongs to the ABC transporter superfamily.

This is an uncharacterized protein from Bacillus subtilis (strain 168).